The following is a 437-amino-acid chain: Phosphomethylpyrimidine synthase (437 aa).

Residues Asn69, Met98, Tyr127, His163, Ser185–Gly187, Asp226–Arg229, and Glu265 each bind substrate. His269 contacts Zn(2+). Tyr292 is a binding site for substrate. Residue His333 participates in Zn(2+) binding. [4Fe-4S] cluster-binding residues include Cys409, Cys412, and Cys416.

Belongs to the ThiC family. [4Fe-4S] cluster is required as a cofactor.

It catalyses the reaction 5-amino-1-(5-phospho-beta-D-ribosyl)imidazole + S-adenosyl-L-methionine = 4-amino-2-methyl-5-(phosphooxymethyl)pyrimidine + CO + 5'-deoxyadenosine + formate + L-methionine + 3 H(+). It functions in the pathway cofactor biosynthesis; thiamine diphosphate biosynthesis. Catalyzes the synthesis of the hydroxymethylpyrimidine phosphate (HMP-P) moiety of thiamine from aminoimidazole ribotide (AIR) in a radical S-adenosyl-L-methionine (SAM)-dependent reaction. The chain is Phosphomethylpyrimidine synthase from Clostridium botulinum (strain Langeland / NCTC 10281 / Type F).